A 573-amino-acid polypeptide reads, in one-letter code: DNA ligase (573 aa).

Glu-250 contacts ATP. Lys-252 (N6-AMP-lysine intermediate) is an active-site residue. Residues Arg-257, Arg-272, Glu-301, Phe-342, Arg-432, and Lys-438 each coordinate ATP.

The protein belongs to the ATP-dependent DNA ligase family. It depends on Mg(2+) as a cofactor.

It catalyses the reaction ATP + (deoxyribonucleotide)n-3'-hydroxyl + 5'-phospho-(deoxyribonucleotide)m = (deoxyribonucleotide)n+m + AMP + diphosphate.. In terms of biological role, DNA ligase that seals nicks in double-stranded DNA during DNA replication, DNA recombination and DNA repair. The chain is DNA ligase from Methanococcus maripaludis (strain C7 / ATCC BAA-1331).